The primary structure comprises 339 residues: DNA-directed RNA polymerase subunit alpha (339 aa).

The segment at 1-233 (MVREEVAGST…DLFLPFLHAE (233 aa)) is alpha N-terminal domain (alpha-NTD). Residues 264–339 (KKGIPLNCIF…IDLLKNKLSF (76 aa)) form an alpha C-terminal domain (alpha-CTD) region.

It belongs to the RNA polymerase alpha chain family. As to quaternary structure, in plastids the minimal PEP RNA polymerase catalytic core is composed of four subunits: alpha, beta, beta', and beta''. When a (nuclear-encoded) sigma factor is associated with the core the holoenzyme is formed, which can initiate transcription.

It localises to the plastid. It is found in the chloroplast. It carries out the reaction RNA(n) + a ribonucleoside 5'-triphosphate = RNA(n+1) + diphosphate. DNA-dependent RNA polymerase catalyzes the transcription of DNA into RNA using the four ribonucleoside triphosphates as substrates. The chain is DNA-directed RNA polymerase subunit alpha from Psathyrostachys stoloniformis.